The chain runs to 99 residues: Large ribosomal subunit protein uL23 (99 aa).

It belongs to the universal ribosomal protein uL23 family. As to quaternary structure, part of the 50S ribosomal subunit. Contacts protein L29, and trigger factor when it is bound to the ribosome.

In terms of biological role, one of the early assembly proteins it binds 23S rRNA. One of the proteins that surrounds the polypeptide exit tunnel on the outside of the ribosome. Forms the main docking site for trigger factor binding to the ribosome. This is Large ribosomal subunit protein uL23 from Hyphomonas neptunium (strain ATCC 15444).